The primary structure comprises 385 residues: Succinate--CoA ligase [ADP-forming] subunit beta (385 aa).

One can recognise an ATP-grasp domain in the interval 9–244 (KEILRKYGVP…QDEEDPLETR (236 aa)). ATP is bound by residues K46, 53–55 (GRG), E99, C102, and E107. Residues N199 and D213 each contribute to the Mg(2+) site. Substrate-binding positions include N264 and 321 to 323 (GIM).

This sequence belongs to the succinate/malate CoA ligase beta subunit family. As to quaternary structure, heterotetramer of two alpha and two beta subunits. It depends on Mg(2+) as a cofactor.

The catalysed reaction is succinate + ATP + CoA = succinyl-CoA + ADP + phosphate. It catalyses the reaction GTP + succinate + CoA = succinyl-CoA + GDP + phosphate. It functions in the pathway carbohydrate metabolism; tricarboxylic acid cycle; succinate from succinyl-CoA (ligase route): step 1/1. Its function is as follows. Succinyl-CoA synthetase functions in the citric acid cycle (TCA), coupling the hydrolysis of succinyl-CoA to the synthesis of either ATP or GTP and thus represents the only step of substrate-level phosphorylation in the TCA. The beta subunit provides nucleotide specificity of the enzyme and binds the substrate succinate, while the binding sites for coenzyme A and phosphate are found in the alpha subunit. This chain is Succinate--CoA ligase [ADP-forming] subunit beta, found in Rickettsia bellii (strain RML369-C).